The chain runs to 371 residues: 3-isopropylmalate dehydrogenase (371 aa).

An NAD(+)-binding site is contributed by 77–90 (GPKWDDNPPHLRPE). Positions 97, 107, 135, and 224 each coordinate substrate. Aspartate 224, aspartate 248, and aspartate 252 together coordinate Mg(2+). Residue 282-294 (GSAPDIAGMNKAN) coordinates NAD(+).

This sequence belongs to the isocitrate and isopropylmalate dehydrogenases family. LeuB type 1 subfamily. In terms of assembly, homodimer. Mg(2+) serves as cofactor. It depends on Mn(2+) as a cofactor.

The protein resides in the cytoplasm. The catalysed reaction is (2R,3S)-3-isopropylmalate + NAD(+) = 4-methyl-2-oxopentanoate + CO2 + NADH. Its pathway is amino-acid biosynthesis; L-leucine biosynthesis; L-leucine from 3-methyl-2-oxobutanoate: step 3/4. Catalyzes the oxidation of 3-carboxy-2-hydroxy-4-methylpentanoate (3-isopropylmalate) to 3-carboxy-4-methyl-2-oxopentanoate. The product decarboxylates to 4-methyl-2 oxopentanoate. The protein is 3-isopropylmalate dehydrogenase of Geobacillus kaustophilus (strain HTA426).